The following is a 280-amino-acid chain: Dermonecrotic toxin LgSicTox-alphaIC1 (280 aa).

Residue His-12 is part of the active site. 2 residues coordinate Mg(2+): Glu-32 and Asp-34. Residue His-48 is the Nucleophile of the active site. 2 disulfide bridges follow: Cys-52–Cys-58 and Cys-54–Cys-197. Residue Asp-92 coordinates Mg(2+).

This sequence belongs to the arthropod phospholipase D family. Class II subfamily. Requires Mg(2+) as cofactor. In terms of tissue distribution, expressed by the venom gland.

Its subcellular location is the secreted. The catalysed reaction is an N-(acyl)-sphingosylphosphocholine = an N-(acyl)-sphingosyl-1,3-cyclic phosphate + choline. It carries out the reaction an N-(acyl)-sphingosylphosphoethanolamine = an N-(acyl)-sphingosyl-1,3-cyclic phosphate + ethanolamine. It catalyses the reaction a 1-acyl-sn-glycero-3-phosphocholine = a 1-acyl-sn-glycero-2,3-cyclic phosphate + choline. The enzyme catalyses a 1-acyl-sn-glycero-3-phosphoethanolamine = a 1-acyl-sn-glycero-2,3-cyclic phosphate + ethanolamine. Its function is as follows. Dermonecrotic toxins cleave the phosphodiester linkage between the phosphate and headgroup of certain phospholipids (sphingolipid and lysolipid substrates), forming an alcohol (often choline) and a cyclic phosphate. This toxin acts on sphingomyelin (SM) with high activity. It may also act on ceramide phosphoethanolamine (CPE), lysophosphatidylcholine (LPC) and lysophosphatidylethanolamine (LPE), but not on lysophosphatidylserine (LPS), and lysophosphatidylglycerol (LPG). It acts by transphosphatidylation, releasing exclusively cyclic phosphate products as second products. Induces platelet aggregation in platelet rich plasma, but not in washed platelet, indicating that this activity is dependent on plasma components. Also induces hemolysis. In vivo, the recombinant protein evokes an intense inflammatory reaction and dermonecrosis, similar to those induced by L.gaucho total venom. Is a good immunogen, capable of inducing immunoprotection in test animals. In terms of biological role, anionic antimicrobial peptide that shows antimicrobial activity against Gram-negative bacteria (MIC=1.15-4.6 uM) (tested on E.coli, P.aeruginosa, and E.cloacae), but not on Gram-negative bacteria (M.luteus, S.aureus, and B.subtilis), neither on fungi and yeasts (A.niger, C.albicans and C.krusei). Does not show hemolytic effects against human erythrocytes, and has no cytotoxic effects against human cervical carcinoma cells (HeLa). The protein is Dermonecrotic toxin LgSicTox-alphaIC1 of Loxosceles gaucho (Spider).